A 238-amino-acid polypeptide reads, in one-letter code: MIAFIVLLSLAAVLQQSSGTVDFASESSNKKDYQKEIVDKHNALRRSVKPTARNMLRMEWNSHAAQNAKRWADRCTFAHSPPHTRTVGKLRCGENIFMSSQPFAWSGVVQAWYDEVKKFVYGIGAKPPGSVIGHYTQVVWYKSHLLGCASAKCSSTKYLYVCQYCPAGNIRGSIATPYKSGPTCGDCPSACVNGLCTNPCKYEDDFSNCKALAKNSKCQTEWIKSKCPAACFCHNKII.

A signal peptide spans 1 to 19; the sequence is MIAFIVLLSLAAVLQQSSG. A propeptide spanning residues 20–28 is cleaved from the precursor; that stretch reads TVDFASESS. The SCP domain maps to 38–164; that stretch reads VDKHNALRRS…STKYLYVCQY (127 aa). 8 disulfide bridges follow: cysteine 75/cysteine 153, cysteine 92/cysteine 165, cysteine 148/cysteine 162, cysteine 184/cysteine 191, cysteine 187/cysteine 196, cysteine 200/cysteine 233, cysteine 209/cysteine 227, and cysteine 218/cysteine 231. In terms of domain architecture, ShKT spans 200-233; that stretch reads CKYEDDFSNCKALAKNSKCQTEWIKSKCPAACFC.

The protein belongs to the CRISP family. In terms of tissue distribution, expressed by the venom gland.

The protein resides in the secreted. Functionally, blocks olfactory (CNGA2) and retinal (CNGA1) CNG channel currents. Does not affect neither depolarization- nor caffeine-induced contraction of smooth muscle. The polypeptide is Cysteine-rich venom protein pseudechetoxin-like (Notechis scutatus scutatus (Mainland tiger snake)).